Reading from the N-terminus, the 176-residue chain is Odorant-binding protein 2a (176 aa).

Positions Met-1–Ala-19 are cleaved as a signal peptide. N-linked (GlcNAc...) asparagine glycans are attached at residues Asn-42 and Asn-124. Cys-79 and Cys-172 are oxidised to a cystine.

It belongs to the calycin superfamily. Lipocalin family. In terms of tissue distribution, expressed in the liver (at protein level). Expressed in epididymis.

Its subcellular location is the secreted. In terms of biological role, involved in the regulation of systematic glucose homeostasis and insulin sensitivity. Involved in the regulation of liver lipid levels by positive regulation of hepatic lipogenesis and negative regulation of fatty acid beta-oxidation; via downstream transcriptional regulation of CPT1A and hepatic lipogenic program gene expression. May regulate hepatic lipogenesis and fatty acid beta-oxidation in an autocrine or paracrine manner. This chain is Odorant-binding protein 2a (Obp2a), found in Mus musculus (Mouse).